The primary structure comprises 356 residues: MLPNQILTDITTVKHSFKAETFRPISTLSLSRNLSVSKFVPCLSKENKRDVLETIAKEFSNIEGEEFFVLPLKDLPIWQRECLLEHYLCPYDLSGSLEGEALIVNRAGTLLAGINLRDHLVLHGIDFVWQPEMLLQKLIDLDIRLQQSLSFAFSPDFGFLTTDPLRCGTALVARAFIHVPALRYRNKLSELLVPHQREFACSSLLPLSQESLGDILCLSNICSLGVSEEQILSSLRLVVSKILSAETEARNLLLKENSTEIKNRILRSIGMLTHSCYLDLQEALDATSWIQLGMSMQWIEDSEKHPLWSPMFWDLRRGHLALYNQDPANKTIEKEIIAQIRAQTTKPQAERLILRV.

One can recognise a Phosphagen kinase C-terminal domain in the interval 22-249 (FRPISTLSLS…SKILSAETEA (228 aa)). ATP is bound by residues 25–29 (ISTLS), 172–176 (VARAF), and 202–207 (SSLLPL).

It belongs to the ATP:guanido phosphotransferase family.

The catalysed reaction is L-arginyl-[protein] + ATP = N(omega)-phospho-L-arginyl-[protein] + ADP + H(+). In terms of biological role, catalyzes the specific phosphorylation of arginine residues in proteins. In Chlamydia muridarum (strain MoPn / Nigg), this protein is Protein-arginine kinase.